The chain runs to 195 residues: Dihydroneopterin triphosphate diphosphatase (195 aa).

Catalysis depends on Asp73, which acts as the Proton acceptor.

Belongs to the HAM1 NTPase family. The cofactor is Mn(2+).

The enzyme catalyses 7,8-dihydroneopterin 3'-triphosphate + H2O = 7,8-dihydroneopterin 3'-phosphate + diphosphate + H(+). The protein operates within cofactor biosynthesis; tetrahydrofolate biosynthesis. In terms of biological role, pyrophosphatase involved in the biosynthesis of tetrahydrofolate. Catalyzes the hydrolysis of dihydroneopterin triphosphate (DHNTP) to dihydroneopterin monophosphate (DHNMP) and pyrophosphate. Shows a strict substrate specificity. Has only weak activity with GTP, ITP, XTP and dTTP, and cannot use ATP, UTP, CTP, NAD(+), NADH, diadenosine triphosphate, diadenosine tetraphosphate, ADP-ribose and UDP-glucose. In Limosilactobacillus reuteri (strain DSM 20016) (Lactobacillus reuteri), this protein is Dihydroneopterin triphosphate diphosphatase.